The sequence spans 466 residues: Asparagine--tRNA ligase (466 aa).

This sequence belongs to the class-II aminoacyl-tRNA synthetase family. Homodimer.

Its subcellular location is the cytoplasm. The enzyme catalyses tRNA(Asn) + L-asparagine + ATP = L-asparaginyl-tRNA(Asn) + AMP + diphosphate + H(+). This chain is Asparagine--tRNA ligase, found in Shewanella sp. (strain ANA-3).